The following is a 296-amino-acid chain: Aquaporin NIP1-1 (296 aa).

Residue M1 is modified to N-acetylmethionine. 2 helical membrane-spanning segments follow: residues 57–77 and 84–104; these read LIAE…SVVV and VVTL…LIYS. Residues 114 to 116 carry the NPA 1 motif; that stretch reads NPA. Transmembrane regions (helical) follow at residues 136 to 156, 180 to 200, and 205 to 225; these read VISQ…LFGL, AFTM…GVAT, and IGEL…LIAA. An NPA 2 motif is present at residues 233 to 235; that stretch reads NPG. The chain crosses the membrane as a helical span at residues 249–269; sequence GIWIYLVAPTLGAIAGAWVYN. S286 is subject to Phosphoserine.

It belongs to the MIP/aquaporin (TC 1.A.8) family. NIP (TC 1.A.8.12) subfamily. As to expression, expressed in roots.

It is found in the membrane. Functionally, water channel probably required to promote glycerol permeability and water transport across cell membranes. The chain is Aquaporin NIP1-1 (NIP1-1) from Arabidopsis thaliana (Mouse-ear cress).